The sequence spans 340 residues: Undecaprenyl-phosphate 4-deoxy-4-formamido-L-arabinose transferase (340 aa).

2 consecutive transmembrane segments (helical) span residues 235–255 (LSIV…ALIF) and 269–289 (LFVL…GMGL).

This sequence belongs to the glycosyltransferase 2 family.

It is found in the cell inner membrane. It carries out the reaction UDP-4-deoxy-4-formamido-beta-L-arabinose + di-trans,octa-cis-undecaprenyl phosphate = 4-deoxy-4-formamido-alpha-L-arabinopyranosyl di-trans,octa-cis-undecaprenyl phosphate + UDP. It participates in glycolipid biosynthesis; 4-amino-4-deoxy-alpha-L-arabinose undecaprenyl phosphate biosynthesis; 4-amino-4-deoxy-alpha-L-arabinose undecaprenyl phosphate from UDP-4-deoxy-4-formamido-beta-L-arabinose and undecaprenyl phosphate: step 1/2. It functions in the pathway bacterial outer membrane biogenesis; lipopolysaccharide biosynthesis. Functionally, catalyzes the transfer of 4-deoxy-4-formamido-L-arabinose from UDP to undecaprenyl phosphate. The modified arabinose is attached to lipid A and is required for resistance to polymyxin and cationic antimicrobial peptides. In Pseudomonas fluorescens (strain Pf0-1), this protein is Undecaprenyl-phosphate 4-deoxy-4-formamido-L-arabinose transferase.